The sequence spans 154 residues: IQ domain-containing protein F3 (154 aa).

Positions 89-118 constitute an IQ domain; sequence QEQATVKLQSCIRMWQCRQCYRQMCNALCL.

The protein is IQ domain-containing protein F3 (IQCF3) of Homo sapiens (Human).